A 274-amino-acid chain; its full sequence is 2,3,4,5-tetrahydropyridine-2,6-dicarboxylate N-succinyltransferase (274 aa).

R104 and D141 together coordinate substrate.

Belongs to the transferase hexapeptide repeat family. Homotrimer.

The protein localises to the cytoplasm. The catalysed reaction is (S)-2,3,4,5-tetrahydrodipicolinate + succinyl-CoA + H2O = (S)-2-succinylamino-6-oxoheptanedioate + CoA. The protein operates within amino-acid biosynthesis; L-lysine biosynthesis via DAP pathway; LL-2,6-diaminopimelate from (S)-tetrahydrodipicolinate (succinylase route): step 1/3. This Serratia proteamaculans (strain 568) protein is 2,3,4,5-tetrahydropyridine-2,6-dicarboxylate N-succinyltransferase.